The following is a 235-amino-acid chain: Large ribosomal subunit protein uL1 (235 aa).

The protein belongs to the universal ribosomal protein uL1 family. As to quaternary structure, part of the 50S ribosomal subunit.

Its function is as follows. Binds directly to 23S rRNA. The L1 stalk is quite mobile in the ribosome, and is involved in E site tRNA release. In terms of biological role, protein L1 is also a translational repressor protein, it controls the translation of the L11 operon by binding to its mRNA. In Lawsonia intracellularis (strain PHE/MN1-00), this protein is Large ribosomal subunit protein uL1.